Here is a 928-residue protein sequence, read N- to C-terminus: Tyrosine-protein phosphatase 3 (928 aa).

Thr75 bears the Phosphothreonine mark. The Rhodanese domain occupies 111 to 232 (PDEKVLLLDV…FKILFPDHIN (122 aa)). Residues 247 to 307 (KSPKTNLMNS…PRNVLSDSPM (61 aa)) form a disordered region. Residue Ser248 is modified to Phosphoserine. Composition is skewed to polar residues over residues 249-259 (PKTNLMNSLHN) and 265-275 (TATTPLSSPQM). Residues 280 to 289 (KVPDDSRSDH) show a composition bias toward basic and acidic residues. The span at 290 to 307 (SNFSSSPSPRNVLSDSPM) shows a compositional bias: low complexity. Residues Ser297 and Ser368 each carry the phosphoserine modification. Disordered stretches follow at residues 467-487 (LTST…NKVQ) and 672-713 (MRKN…NNNN). Positions 502–878 (YKSMLSLESD…IFIYDCLLFY (377 aa)) constitute a Tyrosine-protein phosphatase domain. Over residues 672-691 (MRKNTMGTQNSSLYSAGVQG) the composition is skewed to polar residues. Over residues 692 to 713 (NSSNYSTDNDNDNDNNNNNNNN) the composition is skewed to low complexity. The active-site Phosphocysteine intermediate is the Cys804.

It belongs to the protein-tyrosine phosphatase family. Non-receptor class subfamily. As to quaternary structure, interacts with HOG1.

Its subcellular location is the cytoplasm. It catalyses the reaction O-phospho-L-tyrosyl-[protein] + H2O = L-tyrosyl-[protein] + phosphate. Major phosphatase responsible for tyrosine dephosphorylation of MAP kinases FUS3 and HOG1 to inactivate their activity; it also has important roles, along with MSG5, in the inactivation of FUS3 following pheromone stimulation. The sequence is that of Tyrosine-protein phosphatase 3 (PTP3) from Saccharomyces cerevisiae (strain ATCC 204508 / S288c) (Baker's yeast).